Reading from the N-terminus, the 550-residue chain is Invertase (550 aa).

A signal peptide spans 1 to 22; the sequence is MIQLSPLLLLPLFSVFNSIADA. Substrate-binding positions include 39-42, glutamine 60, and 103-104; these read WMND and FS. Aspartate 42 is an active-site residue. 4 N-linked (GlcNAc...) asparagine glycosylation sites follow: asparagine 112, asparagine 113, asparagine 119, and asparagine 165. 170–171 serves as a coordination point for substrate; sequence RD. N-linked (GlcNAc...) asparagine glycosylation is present at asparagine 211. Glutamate 223 serves as a coordination point for substrate. Residue asparagine 237 is glycosylated (N-linked (GlcNAc...) asparagine). Tryptophan 313 serves as a coordination point for substrate. Asparagine 333, asparagine 364, asparagine 398, and asparagine 420 each carry an N-linked (GlcNAc...) asparagine glycan.

This sequence belongs to the glycosyl hydrolase 32 family.

The enzyme catalyses Hydrolysis of terminal non-reducing beta-D-fructofuranoside residues in beta-D-fructofuranosides.. This is Invertase (INV1) from Wickerhamomyces anomalus (Yeast).